Here is a 496-residue protein sequence, read N- to C-terminus: UDP-glycosyltransferase 73C2 (496 aa).

Residues serine 297, 357 to 359 (SPQ), 374 to 382 (HCGWNSTLE), and 396 to 399 (FGDQ) each bind UDP-alpha-D-glucose.

The protein belongs to the UDP-glycosyltransferase family.

The protein is UDP-glycosyltransferase 73C2 (UGT73C2) of Arabidopsis thaliana (Mouse-ear cress).